The primary structure comprises 303 residues: MANITAQMVKELRESTGAGMMDCKKALQEAEGNMEKAVDLLREKGLSKAAKKAGRVAAEGLVAIEMNDDNTVASMVEVNSETDFVAKNEDFKVFVKDAACMALATDKEDIASLLGETHKEGITLQEVLNNRVAKIGEKLDFRRFAKVVTNGQVAGYIHGGGKIGVLVEMETEARDAKVLELGKDVAMQVAAMNPKYVSRDEVDAEYIAHETEVLTQQALNEGKPANIVEKMVKGRLEKELKEVCLLEQTFVKNPDITVKQLVADVAKAVGSDIKVVKVVRFEVGEGIQKREENFAEEVAKQLK.

The tract at residues 82–85 (TDFV) is involved in Mg(2+) ion dislocation from EF-Tu.

Belongs to the EF-Ts family.

It is found in the cytoplasm. Its function is as follows. Associates with the EF-Tu.GDP complex and induces the exchange of GDP to GTP. It remains bound to the aminoacyl-tRNA.EF-Tu.GTP complex up to the GTP hydrolysis stage on the ribosome. The sequence is that of Elongation factor Ts from Clostridioides difficile (strain 630) (Peptoclostridium difficile).